A 418-amino-acid polypeptide reads, in one-letter code: 3-isopropylmalate dehydratase large subunit (418 aa).

Residues Cys297, Cys357, and Cys360 each contribute to the [4Fe-4S] cluster site.

Belongs to the aconitase/IPM isomerase family. LeuC type 2 subfamily. In terms of assembly, heterodimer of LeuC and LeuD. The cofactor is [4Fe-4S] cluster.

The catalysed reaction is (2R,3S)-3-isopropylmalate = (2S)-2-isopropylmalate. Its pathway is amino-acid biosynthesis; L-leucine biosynthesis; L-leucine from 3-methyl-2-oxobutanoate: step 2/4. Catalyzes the isomerization between 2-isopropylmalate and 3-isopropylmalate, via the formation of 2-isopropylmaleate. This Elusimicrobium minutum (strain Pei191) protein is 3-isopropylmalate dehydratase large subunit.